The following is a 223-amino-acid chain: Leucyl/phenylalanyl-tRNA--protein transferase (223 aa).

This sequence belongs to the L/F-transferase family.

It is found in the cytoplasm. It carries out the reaction N-terminal L-lysyl-[protein] + L-leucyl-tRNA(Leu) = N-terminal L-leucyl-L-lysyl-[protein] + tRNA(Leu) + H(+). The enzyme catalyses N-terminal L-arginyl-[protein] + L-leucyl-tRNA(Leu) = N-terminal L-leucyl-L-arginyl-[protein] + tRNA(Leu) + H(+). The catalysed reaction is L-phenylalanyl-tRNA(Phe) + an N-terminal L-alpha-aminoacyl-[protein] = an N-terminal L-phenylalanyl-L-alpha-aminoacyl-[protein] + tRNA(Phe). Its function is as follows. Functions in the N-end rule pathway of protein degradation where it conjugates Leu, Phe and, less efficiently, Met from aminoacyl-tRNAs to the N-termini of proteins containing an N-terminal arginine or lysine. This Dinoroseobacter shibae (strain DSM 16493 / NCIMB 14021 / DFL 12) protein is Leucyl/phenylalanyl-tRNA--protein transferase.